Here is a 662-residue protein sequence, read N- to C-terminus: MINRITDNKFELVSKYKPSGDQPQAIEQLVDNIEGGEKAQILMGATGTGKTYTMSQVIAQVNKPTLVIAHNKTLAGQLYGEFKEFFPNNAVEYFVSYYDYYQPEAYVPSSDTYIEKDSSVNDEIDKLRHSATSALLERNDVIVVASVSCIYGLGSPKEYSDSVVSLRPGLEISRDKLLNDLVDIQFERNDIDFQRGKFRVRGDVVEIFPASRDEHAFRVEFFGDEIDRIREVEALTGRVLGEVDHLAIFPATHFVTNEDHMEVAIAKIQAELEEQLAIFEKEGKLLEAQRLKQRTEYDIEMLREMGYTNGVENYSRHMDGRSEGEPPYTLLDFFPDDFLIMIDESHMTMGQIRGMYNGDRSRKEMLVNYGFRLPSALDNRPLRREEFESHVHQIVYVSATPGDYENEQTDTVIEQIIRPTGLLDPEVEVRPTMGQIDDLLGEINARVEKNERTFITTLTKKMAEDLTDYFKEMGVKVKYMHSDIKTLERTEIIRDLRLGVFDVLVGINLLREGIDVPEVSLVAILDADKEGFLRNERGLIQTIGRAARNSEGHVIMYADTMTQSMQRAIDETARRRAIQMAYNEEHGIVPQTIKKEIRDLISVTKAALPDKEETVEIESLNKQERKDMIKKLEGQMQEAAGLLDFELAAQIRDMILEIKAMD.

Residues 31-188 (DNIEGGEKAQ…NDLVDIQFER (158 aa)) enclose the Helicase ATP-binding domain. 44-51 (GATGTGKT) provides a ligand contact to ATP. Positions 97-120 (YYDYYQPEAYVPSSDTYIEKDSSV) match the Beta-hairpin motif. One can recognise a Helicase C-terminal domain in the interval 435 to 601 (QIDDLLGEIN…TIKKEIRDLI (167 aa)). One can recognise a UVR domain in the interval 626 to 661 (KDMIKKLEGQMQEAAGLLDFELAAQIRDMILEIKAM).

This sequence belongs to the UvrB family. As to quaternary structure, forms a heterotetramer with UvrA during the search for lesions. Interacts with UvrC in an incision complex.

Its subcellular location is the cytoplasm. Its function is as follows. The UvrABC repair system catalyzes the recognition and processing of DNA lesions. A damage recognition complex composed of 2 UvrA and 2 UvrB subunits scans DNA for abnormalities. Upon binding of the UvrA(2)B(2) complex to a putative damaged site, the DNA wraps around one UvrB monomer. DNA wrap is dependent on ATP binding by UvrB and probably causes local melting of the DNA helix, facilitating insertion of UvrB beta-hairpin between the DNA strands. Then UvrB probes one DNA strand for the presence of a lesion. If a lesion is found the UvrA subunits dissociate and the UvrB-DNA preincision complex is formed. This complex is subsequently bound by UvrC and the second UvrB is released. If no lesion is found, the DNA wraps around the other UvrB subunit that will check the other stand for damage. This is UvrABC system protein B from Streptococcus sanguinis (strain SK36).